Consider the following 209-residue polypeptide: Thymidylate kinase (209 aa).

Residue 10–17 (GIDGCGKS) coordinates ATP.

This sequence belongs to the thymidylate kinase family.

It carries out the reaction dTMP + ATP = dTDP + ADP. Phosphorylation of dTMP to form dTDP in both de novo and salvage pathways of dTTP synthesis. In Parasynechococcus marenigrum (strain WH8102), this protein is Thymidylate kinase.